Reading from the N-terminus, the 272-residue chain is ATP synthase subunit a (272 aa).

5 helical membrane passes run 41-61 (VLNI…LLIF), 101-121 (LIAP…LMDL), 143-165 (VPSA…ILYY), 221-241 (LIFI…LNVP), and 243-263 (AIFH…LTIV).

The protein belongs to the ATPase A chain family. In terms of assembly, F-type ATPases have 2 components, CF(1) - the catalytic core - and CF(0) - the membrane proton channel. CF(1) has five subunits: alpha(3), beta(3), gamma(1), delta(1), epsilon(1). CF(0) has three main subunits: a(1), b(2) and c(9-12). The alpha and beta chains form an alternating ring which encloses part of the gamma chain. CF(1) is attached to CF(0) by a central stalk formed by the gamma and epsilon chains, while a peripheral stalk is formed by the delta and b chains.

The protein localises to the cell inner membrane. Functionally, key component of the proton channel; it plays a direct role in the translocation of protons across the membrane. This is ATP synthase subunit a from Sodalis glossinidius (strain morsitans).